The following is a 1167-amino-acid chain: Outer membrane protein SlpA (1167 aa).

An N-terminal signal peptide occupies residues 1–22; the sequence is MKKSLIALTTALSFGLAAAQTA. The Periplasmic segment spans residues 23–254; sequence APVSAPQVPA…RIAALERNAF (232 aa). Residues 29–92 enclose the SLH domain; the sequence is QVPALTDVPA…DQMRDGETPA (64 aa). Residues 255 to 268 form a beta stranded membrane-spanning segment; sequence SVKPSLTIGYSVSR. At 269 to 377 the chain is on the extracellular side; sequence TSRNFDVDRL…RNGFGFNNLA (109 aa). Positions 274, 276, 305, 308, 310, and 381 each coordinate Cu(2+). The beta stranded transmembrane segment at 378–403 threads the bilayer; sequence RYKEGSTDIGISLGFDTSGQFSQVTS. Over 404–416 the chain is Periplasmic; that stretch reads GTGGSLFSTAGRL. A beta stranded membrane pass occupies residues 417 to 428; sequence QVNQIDLNFGLV. Residues 429-471 lie on the Extracellular side of the membrane; the sequence is TGLPSDAYVDTNGNGKKDDGEATGRGTYLGSGGTAAILRDPAG. Positions 438, 442, 444, 446, and 449 each coordinate Fe(3+). A beta stranded membrane pass occupies residues 472–490; sequence NVYRPVFFRFKNATTQFSV. The Periplasmic segment spans residues 491–494; the sequence is GNNP. Residues 495–500 form a beta stranded membrane-spanning segment; the sequence is VIVTLG. At 501-519 the chain is on the extracellular side; that stretch reads QQQKFYFSDYVFDNNYDGR. The Cu(2+) site is built by D513 and N515. A beta stranded transmembrane segment spans residues 520 to 528; the sequence is GDGFTVTVD. At 529–540 the chain is on the periplasmic side; that stretch reads GSNVPVIGAWKP. The chain crosses the membrane as a beta stranded span at residues 541-549; it reads QIKGVYGSR. Cu(2+)-binding residues include R549, G551, D553, and G559. Residues 550–561 lie on the Extracellular side of the membrane; that stretch reads SGLDGTAEAGYG. A beta stranded membrane pass occupies residues 562 to 571; sequence VYYRGVRAQI. Topologically, residues 572–577 are periplasmic; the sequence is TPVGTL. A beta stranded membrane pass occupies residues 578–588; it reads TAGIHYAQEGR. The Extracellular portion of the chain corresponds to 589-601; sequence DMFGAAQNTTSTP. The chain crosses the membrane as a beta stranded span at residues 602 to 615; that stretch reads SDVTTYGADLHGKA. Topologically, residues 616–617 are periplasmic; it reads FG. A beta stranded membrane pass occupies residues 618–630; sequence VELHSEYATSRVR. Position 622 (S622) interacts with deinoxanthin. The Extracellular segment spans residues 631-638; it reads PNTANAAV. Residues 639–649 form a beta stranded membrane-spanning segment; the sequence is QTSNAFYARVA. The Periplasmic portion of the chain corresponds to 650-670; sequence TRKDNLAFDLNTPAAKFGNDT. The beta stranded transmembrane segment at 671–682 threads the bilayer; the sequence is FGVSLYDLNYRK. The Extracellular segment spans residues 683–753; sequence IDAGYNNVAG…GTVVATNTKI (71 aa). G716 contributes to the Cu(2+) binding site. The beta stranded transmembrane segment at 754–766 threads the bilayer; sequence GQMGFGVKAAANL. At 767-768 the chain is on the periplasmic side; the sequence is GP. A beta stranded membrane pass occupies residues 769–779; sequence VAIGGYYDTST. Residues 780–788 lie on the Extracellular side of the membrane; sequence GANGDNANR. A beta stranded membrane pass occupies residues 789–798; that stretch reads MTEAGGSAKV. Over 799-802 the chain is Periplasmic; sequence AYSI. Residues 803 to 814 traverse the membrane as a beta stranded segment; it reads FSLRGTYNTLDS. Residues 815-831 are Extracellular-facing; the sequence is NRPQIYRDAAGTQIIGD. A beta stranded transmembrane segment spans residues 832-843; it reads AKVRRYAVQADV. Over 844 to 848 the chain is Periplasmic; that stretch reads TPGLG. A beta stranded membrane pass occupies residues 849 to 860; sequence LFVGAYYRDVNV. Residues 861–931 lie on the Extracellular side of the membrane; sequence NGVRSTTDRG…DQSRTATCFT (71 aa). The chain crosses the membrane as a beta stranded span at residues 932-940; sequence SYGVEAGHA. At 941–949 the chain is on the periplasmic side; it reads GDNANALVK. Residues 950–960 traverse the membrane as a beta stranded segment; the sequence is DLFFRVGYSRV. Residues 961-976 are Extracellular-facing; that stretch reads YVPTTATATTGDFSGS. A beta stranded membrane pass occupies residues 977 to 988; it reads VTYGDARYDRKV. Residues 989–990 lie on the Periplasmic side of the membrane; it reads GV. A beta stranded transmembrane segment spans residues 991 to 1002; the sequence is ANVRLAGSFSTT. The Extracellular portion of the chain corresponds to 1003 to 1014; sequence NTQLDSRPAGTR. The beta stranded transmembrane segment at 1015-1023 threads the bilayer; it reads GAVGLIVRT. The Periplasmic portion of the chain corresponds to 1024–1032; it reads DPLENVPFR. The chain crosses the membrane as a beta stranded span at residues 1033 to 1046; it reads PQFNGQVGYYTADN. The Extracellular segment spans residues 1047–1052; that stretch reads RVAAGN. Residues 1053 to 1066 traverse the membrane as a beta stranded segment; it reads YNANATKYGAGVVL. Residues 1067–1073 lie on the Periplasmic side of the membrane; it reads NDFLLPQ. Residues 1074-1086 form a beta stranded membrane-spanning segment; the sequence is TKIGVRYDGYMAQ. The Extracellular segment spans residues 1087-1108; it reads NRQYTPFDGDGTQGYFSDANNN. A beta stranded transmembrane segment spans residues 1109-1122; that stretch reads RRTNLNGVYVEGAY. Over 1123-1124 the chain is Periplasmic; it reads QD. Residues 1125–1138 form a beta stranded membrane-spanning segment; the sequence is LIFSYGTYTLSQKD. At 1139-1153 the chain is on the extracellular side; sequence LNGVEYGSGINNGQP. Residues 1154 to 1166 form a beta stranded membrane-spanning segment; it reads ARGQTFKISYKVN. Residue F1167 is a topological domain, periplasmic.

As to quaternary structure, homotrimer. Part of a heterooligomeric complex resulting in the main assembly named S-layer deinoxanthin-binding complex (SDBC) which is composed of six different subunits, namely SlpA, DR_2310, DR_0505, DR_A0283, DR_A0282, and DR_A0281.

It is found in the cell envelope. Its subcellular location is the cell outer membrane. It catalyses the reaction L-arginine(in) = L-arginine(out). The enzyme catalyses L-lysine(in) = L-lysine(out). The catalysed reaction is L-glutamate(out) = L-glutamate(in). Plays an important role in the structural organization and integrity of the cell envelope, bridging the outer membrane to the peptidoglyan layer. Is a highly abundant molecule in the D.radiodurans cell envelope but is not a fundamental component of the S-layer. Binds the carotenoid deinoxanthin, a strong protective antioxidant specific of this bacterium, and could be part of the first lane of defense against UV radiation, especially under desiccation. Appears to be a nonselective channel. Is able to transport charged amino acids such as Lys, Arg and Glu; the large dimension of the pore points toward the physiological importance of the SDBC complex in assisting and allowing the exchange of substances, including nutrients, with the surrounding environment. This is Outer membrane protein SlpA from Deinococcus radiodurans (strain ATCC 13939 / DSM 20539 / JCM 16871 / CCUG 27074 / LMG 4051 / NBRC 15346 / NCIMB 9279 / VKM B-1422 / R1).